The chain runs to 628 residues: Serine/threonine-protein kinase Nek11 (628 aa).

A Protein kinase domain is found at 30–288; sequence YVLQQKLGSG…AADILKAPYM (259 aa). ATP-binding positions include 36 to 44 and K62; that span reads LGSGSFGTV. The Proton acceptor role is filled by D159. S274 carries the phosphoserine; by CHEK1 modification. Positions 347 to 385 form a coiled coil; the sequence is WLRKLQAADERARRLKKIAEENYKENDKRMQALRSRNVG. Acidic residues predominate over residues 452-463; the sequence is SEDSEEQEEEMI. Positions 452–475 are disordered; that stretch reads SEDSEEQEEEMIFSEAGGDTKEEE.

This sequence belongs to the protein kinase superfamily. NEK Ser/Thr protein kinase family. NIMA subfamily. In terms of assembly, interacts with NEK2. Mn(2+) serves as cofactor. The cofactor is Mg(2+). Phosphorylated by NEK2. Phosphorylation at Ser-274 is important for its activation.

Its subcellular location is the nucleus. It localises to the nucleolus. It catalyses the reaction L-seryl-[protein] + ATP = O-phospho-L-seryl-[protein] + ADP + H(+). The enzyme catalyses L-threonyl-[protein] + ATP = O-phospho-L-threonyl-[protein] + ADP + H(+). Autorepressed by intramolecular binding of the C-terminus which dissociates following phosphorylation by NEK2. Activated in response to DNA damage. Inhibited by zinc. In terms of biological role, protein kinase which plays an important role in the G2/M checkpoint response to DNA damage. Controls degradation of CDC25A by directly phosphorylating it on residues whose phosphorylation is required for BTRC-mediated polyubiquitination and degradation. This is Serine/threonine-protein kinase Nek11 from Mus musculus (Mouse).